A 138-amino-acid polypeptide reads, in one-letter code: Putative pre-16S rRNA nuclease (138 aa).

Belongs to the YqgF nuclease family.

The protein resides in the cytoplasm. Functionally, could be a nuclease involved in processing of the 5'-end of pre-16S rRNA. The chain is Putative pre-16S rRNA nuclease (yrrK) from Bacillus subtilis (strain 168).